We begin with the raw amino-acid sequence, 377 residues long: tRNA-queuosine alpha-mannosyltransferase (377 aa).

It belongs to the glycosyltransferase group 1 family. Glycosyltransferase 4 subfamily.

The enzyme catalyses queuosine(34) in tRNA(Asp) + GDP-alpha-D-mannose = O-4''-alpha-D-mannosylqueuosine(34) in tRNA(Asp) + GDP + H(+). Functionally, glycosyltransferase that specifically catalyzes mannosylation of cytoplasmic tRNA(Asp) modified with queuosine at position 34 (queuosine(34)). Mannosylates the cyclopentene moiety of queuosine(34) in tRNA(Asp) to form mannosyl-queuosine(34). This is tRNA-queuosine alpha-mannosyltransferase from Drosophila melanogaster (Fruit fly).